Consider the following 281-residue polypeptide: Oxidoreductase-like protein SRL4 (281 aa).

NADP(+) is bound by residues Leu-39, Thr-60, Lys-67, Lys-152, and Lys-197. Lys-197 acts as the Lowers pKa of active site Tyr in catalysis.

It belongs to the short-chain dehydrogenases/reductases (SDR) family.

Its function is as follows. May be involved in the regulation of dNTP production. Induces the SOS system when expressed in E.coli, therefore, it may play a role in DNA metabolism and/or in genome stability. This chain is Oxidoreductase-like protein SRL4 (SRL4), found in Saccharomyces cerevisiae (strain ATCC 204508 / S288c) (Baker's yeast).